The following is a 424-amino-acid chain: Mitogen-activated protein kinase mpkA (424 aa).

Residues 23–314 (YNVTKELGQG…VEEALEHPYL (292 aa)) enclose the Protein kinase domain. Residues 29-37 (LGQGAYGIV) and Lys-52 each bind ATP. Positions 375-424 (QQIAQQTNVPIPDHQQGGWKQEEPKPQEVHAAGGHVNDLESSLQRGMDVQ) are disordered.

The protein belongs to the protein kinase superfamily. Ser/Thr protein kinase family. In terms of assembly, interacts with flbB, flbC, brlA, and rasB. Interacts with fmqA and fmqC. Interacts with hsp90. Mg(2+) is required as a cofactor. Post-translationally, phosphorylated by the upstreamm MAPKK mkk2. Phosphorylation is induced during asexual development. Phosphorylation is regulated by rlmA.

It carries out the reaction L-seryl-[protein] + ATP = O-phospho-L-seryl-[protein] + ADP + H(+). It catalyses the reaction L-threonyl-[protein] + ATP = O-phospho-L-threonyl-[protein] + ADP + H(+). With respect to regulation, activated by threonine and tyrosine phosphorylation by the upstreamm MAPKK mkk2. Functionally, mitogen-activated protein kinase; part of cell wall integrity (CWI) signaling pathway composed of pkcA, the bck1-mkk2-mpka MAPK cascade and the downstream rlmA transcription regulator. The CWI signaling pathway regulates cell wall integrity and pyomelanin formation. CWI also controls oxidative stress response, gliotoxin production, iron adaptation and asexual development. Finally, CWI is constitutively required for A.fumigatus to cope with the temperature increase found in the mammalian lung environment, during infection. MpkA positively modulates the expression of fumiquinazoline cluster during conidiogenesis and directly phosphorylates fmqC, and perhaps also fmqA. The protein is Mitogen-activated protein kinase mpkA of Aspergillus fumigatus (strain ATCC MYA-4609 / CBS 101355 / FGSC A1100 / Af293) (Neosartorya fumigata).